Consider the following 146-residue polypeptide: Putative pre-16S rRNA nuclease (146 aa).

Belongs to the YqgF nuclease family.

Its subcellular location is the cytoplasm. Functionally, could be a nuclease involved in processing of the 5'-end of pre-16S rRNA. In Dechloromonas aromatica (strain RCB), this protein is Putative pre-16S rRNA nuclease.